Here is a 768-residue protein sequence, read N- to C-terminus: P-selectin (768 aa).

A signal peptide spans 1–41 (MAGCPKGSWTPRLRSVILGGAQLIWFSALISELVNQKEVAA). Topologically, residues 42-709 (WTYNYSTKAY…QAGTLTIQEA (668 aa)) are extracellular. One can recognise a C-type lectin domain in the interval 58–158 (VFCRRHFTDL…PCFKRKRALC (101 aa)). 21 disulfides stabilise this stretch: Cys-60–Cys-158, Cys-131–Cys-150, Cys-163–Cys-174, Cys-168–Cys-183, Cys-185–Cys-194, Cys-200–Cys-244, Cys-230–Cys-257, Cys-262–Cys-306, Cys-292–Cys-319, Cys-324–Cys-368, Cys-354–Cys-381, Cys-386–Cys-430, Cys-416–Cys-443, Cys-448–Cys-492, Cys-478–Cys-505, Cys-510–Cys-554, Cys-540–Cys-567, Cys-580–Cys-624, Cys-610–Cys-637, Cys-642–Cys-686, and Cys-672–Cys-699. Glu-121, Asn-123, and Asn-124 together coordinate Ca(2+). Asn-123 lines the a carbohydrate pocket. A carbohydrate contacts are provided by Glu-133 and Asn-146. 2 residues coordinate Ca(2+): Asn-146 and Asp-147. The EGF-like domain occupies 159–195 (YTASCQDMSCSNQGECIETIGSYTCSCYPGFYGPECE). Sushi domains lie at 198–259 (KECG…KCDA), 260–321 (VQCQ…TCEA), 322–383 (IACE…FCEA), 384–445 (LQCP…ECQA), 446–507 (VSCA…TCEA), 508–569 (IKCP…TCKG), 578–639 (VRCP…MCRA), and 640–701 (VKCS…TCQA). Asn-398 carries N-linked (GlcNAc...) asparagine glycosylation. N-linked (GlcNAc...) asparagine glycosylation is present at Asn-603. N-linked (GlcNAc...) asparagine glycans are attached at residues Asn-654, Asn-661, and Asn-679. Residues 710-733 (LTYLGGAVASTTGLAVGGTLLALL) form a helical membrane-spanning segment. The Cytoplasmic segment spans residues 734 to 768 (RKRLRKKDDGKCPLNPHSHLGTYGVFTNAAYDPTP). Cys-745 is lipidated: S-palmitoyl cysteine; alternate. Cys-745 is lipidated: S-stearoyl cysteine; alternate. The Endocytosis signal signature appears at 756–759 (YGVF). An interaction with SNX17 region spans residues 759–768 (FTNAAYDPTP).

Belongs to the selectin/LECAM family. As to quaternary structure, interacts with SNX17. Interacts with SELPLG/PSGL1 and PODXL2 and mediates neutrophil adhesion and leukocyte rolling. This interaction requires the sialyl-Lewis X epitope of SELPLG and PODXL2, and specific tyrosine sulfation on SELPLG. Interacts (via C-type lectin domain) with alpha-IIb/beta3 integrin ITGA2B:ITGB3 and alpha-V/beta-3 integrin ITGAV:ITGB3. Interacts with alpha5/beta1 integrin ITGA5:ITGB1 and alpha4/beta1 integrin ITGA4:ITGB. In terms of tissue distribution, stored in the alpha-granules of platelets and Weibel-Palade bodies of endothelial cells. Upon cell activation by agonists, P-selectin is transported rapidly to the cell surface.

Its subcellular location is the cell membrane. Functionally, ca(2+)-dependent receptor for myeloid cells that binds to carbohydrates on neutrophils and monocytes. Mediates the interaction of activated endothelial cells or platelets with leukocytes. The ligand recognized is sialyl-Lewis X. Mediates rapid rolling of leukocyte rolling over vascular surfaces during the initial steps in inflammation through interaction with SELPLG. Mediates cell-cell interactions and cell adhesion via the interaction with integrin alpha-IIb/beta3 (ITGA2B:ITGB3) and integrin alpha-V/beta-3 (ITGAV:ITGB3). This Mus musculus (Mouse) protein is P-selectin (Selp).